The chain runs to 206 residues: Undecaprenyl-diphosphatase (206 aa).

The next 5 membrane-spanning stretches (helical) occupy residues 5-25 (YYWI…LIGG), 53-73 (FLSK…LLIF), 79-99 (IGIT…VSKY), 138-158 (VTLL…EAVL), and 164-184 (VYVG…GSWI).

The protein localises to the cell membrane. The catalysed reaction is di-trans,octa-cis-undecaprenyl diphosphate + H2O = di-trans,octa-cis-undecaprenyl phosphate + phosphate + H(+). In Sulfolobus acidocaldarius (strain ATCC 33909 / DSM 639 / JCM 8929 / NBRC 15157 / NCIMB 11770), this protein is Undecaprenyl-diphosphatase (sepP).